Here is a 525-residue protein sequence, read N- to C-terminus: Protein MGF 505-6R (525 aa).

ANK repeat units lie at residues 54–83, 129–158, 261–291, and 324–351; these read SIND…NLHY, ACDF…LLNV, NIHR…APNT, and KKLV…NLVD.

The protein belongs to the asfivirus MGF 505 family.

In terms of biological role, plays a role in virus cell tropism, and may be required for efficient virus replication in macrophages. The polypeptide is Protein MGF 505-6R (Ornithodoros (relapsing fever ticks)).